The primary structure comprises 610 residues: E-selectin (610 aa).

The signal sequence occupies residues 1-21; sequence MIASQFLSALTLVLLIKESGA. The C-type lectin domain occupies 22-138; that stretch reads WSYSASTTNM…CNKKKLALCY (117 aa). Residues 22–555 are Extracellular-facing; sequence WSYSASTTNM…CEATAKSNIP (534 aa). Residue Asn-30 is glycosylated (N-linked (GlcNAc...) asparagine). 19 disulfide bridges follow: Cys-40–Cys-137, Cys-110–Cys-129, Cys-142–Cys-153, Cys-147–Cys-162, Cys-164–Cys-173, Cys-179–Cys-223, Cys-192–Cys-205, Cys-209–Cys-236, Cys-241–Cys-285, Cys-254–Cys-267, Cys-271–Cys-298, Cys-303–Cys-348, Cys-334–Cys-361, Cys-366–Cys-411, Cys-397–Cys-424, Cys-429–Cys-474, Cys-460–Cys-487, Cys-492–Cys-533, and Cys-519–Cys-546. Residues Glu-101, Asn-103, and Glu-108 each contribute to the Ca(2+) site. A carbohydrate contacts are provided by residues 101–108, 112–117, and 125–127; these read EPNNKQNE, EIYIKR, and NDE. 2 residues coordinate Ca(2+): Asn-125 and Asp-126. Residues 139 to 174 enclose the EGF-like domain; it reads TAACTHTSCSGHGECVETINNYTCQCHPGFTGLRCE. A glycan (N-linked (GlcNAc...) asparagine) is linked at Asn-159. Sushi domains follow at residues 177–238, 239–300, 314–363, 365–426, 428–489, and 490–548; these read VTCQ…ACHV, VECD…TCKA, VNCS…VCKA, QCKA…TCEA, RCDA…SCQV, and VQCA…TCEA. N-linked (GlcNAc...) asparagine glycans are attached at residues Asn-198 and Asn-202. Residue Asn-264 is glycosylated (N-linked (GlcNAc...) asparagine). Asn-315, Asn-327, and Asn-331 each carry an N-linked (GlcNAc...) asparagine glycan. Asn-526 carries N-linked (GlcNAc...) asparagine glycosylation. Residues 556–577 traverse the membrane as a helical segment; it reads LTVGLSAAGTSLLTLASFLFWL. Residues 578–610 lie on the Cytoplasmic side of the membrane; sequence LKRLRRKAKKFVPASSYQSLQSDGSYQMPSESA.

The protein belongs to the selectin/LECAM family. As to quaternary structure, interacts with SELPLG/PSGL1 and PODXL2 through the sialyl Lewis X epitope. SELPLG sulfation appears not to be required for this interaction.

It is found in the cell membrane. Functionally, cell-surface glycoprotein having a role in immunoadhesion. Mediates in the adhesion of blood neutrophils in cytokine-activated endothelium through interaction with SELPLG/PSGL1. May have a role in capillary morphogenesis. The chain is E-selectin (SELE) from Equus caballus (Horse).